The sequence spans 310 residues: MKTLTRKLSRTAITLVLVILAFIAIFRAWVYYTESPWTRDARFSADVVAIAPDVAGLITHVNVHDNQLVQKDQVLFTIDQPRYQKALAEAEADVAYYQVLAQEKRQEAGRRNRLGVQAMSREEIDQANNVLQTVLHQLAKAQATRDLAKLDLERTVIRAPADGWVTNLNVYAGEFITRGSTAVALVKKNSFYVQAYMEETKLEGVRPGYRAEITPLGSNRVLKGTVDSVAAGVTNTSSTSDAKGMATIDSNLEWVRLAQRVPVRIRLDEQQGNLWPAGTTATVVITGKQDRDASQDSFFRKLAHRLREFG.

A helical membrane pass occupies residues 12–32 (AITLVLVILAFIAIFRAWVYY).

This sequence belongs to the membrane fusion protein (MFP) (TC 8.A.1) family.

Its subcellular location is the cell inner membrane. Its function is as follows. Forms an efflux pump with AaeB. This chain is p-hydroxybenzoic acid efflux pump subunit AaeA, found in Salmonella arizonae (strain ATCC BAA-731 / CDC346-86 / RSK2980).